A 326-amino-acid polypeptide reads, in one-letter code: Ribosomal RNA small subunit methyltransferase H (326 aa).

S-adenosyl-L-methionine is bound by residues 45–47 (GGH), Asp65, Asp113, and Gln120. The tract at residues 299 to 326 (PSAEEITRNPRSRSARLRAAERIAHDGR) is disordered. Positions 316-326 (RAAERIAHDGR) are enriched in basic and acidic residues.

It belongs to the methyltransferase superfamily. RsmH family.

The protein localises to the cytoplasm. The catalysed reaction is cytidine(1402) in 16S rRNA + S-adenosyl-L-methionine = N(4)-methylcytidine(1402) in 16S rRNA + S-adenosyl-L-homocysteine + H(+). Specifically methylates the N4 position of cytidine in position 1402 (C1402) of 16S rRNA. The chain is Ribosomal RNA small subunit methyltransferase H from Thermomicrobium roseum (strain ATCC 27502 / DSM 5159 / P-2).